A 117-amino-acid polypeptide reads, in one-letter code: Protein Wnt-6 (117 aa).

Ser-1 carries the O-palmitoleoyl serine; by PORCN lipid modification. Cys-83 and Cys-98 are disulfide-bonded. Asn-84 carries an N-linked (GlcNAc...) asparagine glycan.

This sequence belongs to the Wnt family. Palmitoleoylation is required for efficient binding to frizzled receptors. Depalmitoleoylation leads to Wnt signaling pathway inhibition.

It localises to the secreted. The protein localises to the extracellular space. Its subcellular location is the extracellular matrix. Functionally, ligand for members of the frizzled family of seven transmembrane receptors. Probable developmental protein. May be a signaling molecule which affects the development of discrete regions of tissues. Is likely to signal over only few cell diameters. This Thunnus thynnus (Atlantic bluefin tuna) protein is Protein Wnt-6 (wnt6).